Here is a 747-residue protein sequence, read N- to C-terminus: Elongation factor G, mitochondrial (747 aa).

The N-terminal 32 residues, 1-32 (MTLITRVLNGNLPLRLSTLKAARQLQCGYSSH), are a transit peptide targeting the mitochondrion. In terms of domain architecture, tr-type G spans 42–319 (ERIRNIGISA…AVVDYLPNPG (278 aa)). GTP is bound by residues 51-58 (AHIDSGKT), 118-122 (DTPGH), and 172-175 (NKLD).

This sequence belongs to the TRAFAC class translation factor GTPase superfamily. Classic translation factor GTPase family. EF-G/EF-2 subfamily.

It localises to the mitochondrion. Its pathway is protein biosynthesis; polypeptide chain elongation. Its function is as follows. Mitochondrial GTPase that catalyzes the GTP-dependent ribosomal translocation step during translation elongation. During this step, the ribosome changes from the pre-translocational (PRE) to the post-translocational (POST) state as the newly formed A-site-bound peptidyl-tRNA and P-site-bound deacylated tRNA move to the P and E sites, respectively. Catalyzes the coordinated movement of the two tRNA molecules, the mRNA and conformational changes in the ribosome. Essential during development as it acts as a retrograde signal from mitochondria to the nucleus to slow down cell proliferation if mitochondrial energy output is low. The polypeptide is Elongation factor G, mitochondrial (Drosophila mojavensis (Fruit fly)).